A 266-amino-acid polypeptide reads, in one-letter code: GTP cyclohydrolase III (266 aa).

Belongs to the archaeal-type GTP cyclohydrolase family.

It carries out the reaction GTP + 3 H2O = 2-amino-5-formylamino-6-(5-phospho-D-ribosylamino)pyrimidin-4(3H)-one + 2 phosphate + 2 H(+). In terms of biological role, catalyzes the formation of 2-amino-5-formylamino-6-ribofuranosylamino-4(3H)-pyrimidinone ribonucleotide monophosphate and inorganic phosphate from GTP. Also has an independent pyrophosphate phosphohydrolase activity. The chain is GTP cyclohydrolase III from Methanococcus vannielii (strain ATCC 35089 / DSM 1224 / JCM 13029 / OCM 148 / SB).